Consider the following 512-residue polypeptide: Kynurenine 3-monooxygenase (512 aa).

Belongs to the aromatic-ring hydroxylase family. KMO subfamily. The cofactor is FAD.

It is found in the mitochondrion outer membrane. The catalysed reaction is L-kynurenine + NADPH + O2 + H(+) = 3-hydroxy-L-kynurenine + NADP(+) + H2O. It participates in cofactor biosynthesis; NAD(+) biosynthesis; quinolinate from L-kynurenine: step 1/3. Its function is as follows. Catalyzes the hydroxylation of L-kynurenine (L-Kyn) to form 3-hydroxy-L-kynurenine (L-3OHKyn). Required for synthesis of quinolinic acid. This Neurospora crassa (strain ATCC 24698 / 74-OR23-1A / CBS 708.71 / DSM 1257 / FGSC 987) protein is Kynurenine 3-monooxygenase (nic-3).